Reading from the N-terminus, the 453-residue chain is Carbamoyl phosphate synthase arginine-specific small chain (453 aa).

Residues 1 to 28 (MFARVFKAMPARASALTSVNASIPARFM) constitute a mitochondrion transit peptide. In terms of domain architecture, Glutamine amidotransferase type-1 spans 219-406 (HVAVIDCGVK…IDSVKKYKAS (188 aa)). The Nucleophile role is filled by Cys295. Residues His379 and Glu381 contribute to the active site.

The protein belongs to the CarA family. In terms of assembly, heterodimer composed of 2 chains; the small (or glutamine) chain promotes the hydrolysis of glutamine to ammonia, which is used by the large (or ammonia) chain to synthesize carbamoyl phosphate.

The protein localises to the mitochondrion matrix. The enzyme catalyses hydrogencarbonate + L-glutamine + 2 ATP + H2O = carbamoyl phosphate + L-glutamate + 2 ADP + phosphate + 2 H(+). It carries out the reaction L-glutamine + H2O = L-glutamate + NH4(+). Its pathway is amino-acid biosynthesis; L-arginine biosynthesis; carbamoyl phosphate from bicarbonate: step 1/1. In terms of biological role, small subunit of the arginine-specific carbamoyl phosphate synthase (CPSase). CPSase catalyzes the formation of carbamoyl phosphate from the ammonia moiety of glutamine, carbonate, and phosphate donated by ATP, the first step of the arginine biosynthetic pathway. The small subunit (glutamine amidotransferase) binds and cleaves glutamine to supply the large subunit with the substrate ammonia. This is Carbamoyl phosphate synthase arginine-specific small chain (cpa1) from Aspergillus fumigatus (strain ATCC MYA-4609 / CBS 101355 / FGSC A1100 / Af293) (Neosartorya fumigata).